A 586-amino-acid polypeptide reads, in one-letter code: Asparagine synthetase [glutamine-hydrolyzing] (586 aa).

Cys2 (for GATase activity) is an active-site residue. One can recognise a Glutamine amidotransferase type-2 domain in the interval 2–185; that stretch reads CGILAVLGVV…PGHLYSSKTG (184 aa). L-glutamine contacts are provided by residues 50–54, 75–77, and Asp98; these read RLAII and NGE. An Asparagine synthetase domain is found at 193-516; sequence PPWFSETVPS…PQDSARETVP (324 aa). Residues Leu231, Ile267, and 341–342 each bind ATP; that span reads SG.

It carries out the reaction L-aspartate + L-glutamine + ATP + H2O = L-asparagine + L-glutamate + AMP + diphosphate + H(+). The protein operates within amino-acid biosynthesis; L-asparagine biosynthesis; L-asparagine from L-aspartate (L-Gln route): step 1/1. Functionally, essential for nitrogen assimilation, distribution and remobilization within the plant via the phloem. This Zea mays (Maize) protein is Asparagine synthetase [glutamine-hydrolyzing] (ASN1).